The primary structure comprises 240 residues: Probable septum site-determining protein MinC (240 aa).

It belongs to the MinC family. Interacts with MinD and FtsZ.

Cell division inhibitor that blocks the formation of polar Z ring septums. Rapidly oscillates between the poles of the cell to destabilize FtsZ filaments that have formed before they mature into polar Z rings. Prevents FtsZ polymerization. The sequence is that of Probable septum site-determining protein MinC from Acinetobacter baylyi (strain ATCC 33305 / BD413 / ADP1).